Here is a 115-residue protein sequence, read N- to C-terminus: Holo-[acyl-carrier-protein] synthase (115 aa).

2 residues coordinate Mg(2+): Asp-6 and Glu-51.

It belongs to the P-Pant transferase superfamily. AcpS family. It depends on Mg(2+) as a cofactor.

The protein localises to the cytoplasm. The catalysed reaction is apo-[ACP] + CoA = holo-[ACP] + adenosine 3',5'-bisphosphate + H(+). In terms of biological role, transfers the 4'-phosphopantetheine moiety from coenzyme A to a Ser of acyl-carrier-protein. The chain is Holo-[acyl-carrier-protein] synthase from Campylobacter jejuni subsp. jejuni serotype O:2 (strain ATCC 700819 / NCTC 11168).